We begin with the raw amino-acid sequence, 142 residues long: MLKKDKSELTDIEYIVTQENGTEPPFMNEYWNHFAKGIYVDKISGKPLFTSEEKFHSECGWPSFSKALDDDEIIELVDKSFGMLRTEVRSEESNSHLGHVFNDGPKESGGLRYCINSAAIQFIPYEKLEELGYGDLISHFDK.

One can recognise a MsrB domain in the interval 2–125; it reads LKKDKSELTD…NSAAIQFIPY (124 aa). The active-site Nucleophile is cysteine 114.

The protein belongs to the MsrB Met sulfoxide reductase family.

The catalysed reaction is L-methionyl-[protein] + [thioredoxin]-disulfide + H2O = L-methionyl-(R)-S-oxide-[protein] + [thioredoxin]-dithiol. The chain is Peptide methionine sulfoxide reductase MsrB from Staphylococcus aureus (strain USA300).